Consider the following 379-residue polypeptide: Chaperone protein DnaJ (379 aa).

One can recognise a J domain in the interval 5-70 (DYYEVLGVQK…QKRAAYDRFG (66 aa)). The CR-type zinc-finger motif lies at 137 to 215 (GATTTVRVPT…CGGQGRVRKE (79 aa)). 8 residues coordinate Zn(2+): cysteine 150, cysteine 153, cysteine 167, cysteine 170, cysteine 189, cysteine 192, cysteine 203, and cysteine 206. CXXCXGXG motif repeat units follow at residues 150 to 157 (CESCNGTG), 167 to 174 (CPTCNGHG), 189 to 196 (CPACHGVG), and 203 to 210 (CRTCGGQG).

It belongs to the DnaJ family. As to quaternary structure, homodimer. Zn(2+) is required as a cofactor.

The protein localises to the cytoplasm. In terms of biological role, participates actively in the response to hyperosmotic and heat shock by preventing the aggregation of stress-denatured proteins and by disaggregating proteins, also in an autonomous, DnaK-independent fashion. Unfolded proteins bind initially to DnaJ; upon interaction with the DnaJ-bound protein, DnaK hydrolyzes its bound ATP, resulting in the formation of a stable complex. GrpE releases ADP from DnaK; ATP binding to DnaK triggers the release of the substrate protein, thus completing the reaction cycle. Several rounds of ATP-dependent interactions between DnaJ, DnaK and GrpE are required for fully efficient folding. Also involved, together with DnaK and GrpE, in the DNA replication of plasmids through activation of initiation proteins. The sequence is that of Chaperone protein DnaJ from Rhodospirillum centenum (strain ATCC 51521 / SW).